Consider the following 64-residue polypeptide: Large ribosomal subunit protein uL30 (64 aa).

It belongs to the universal ribosomal protein uL30 family. In terms of assembly, part of the 50S ribosomal subunit.

The chain is Large ribosomal subunit protein uL30 from Desulforudis audaxviator (strain MP104C).